The sequence spans 448 residues: Asparagine--tRNA ligase (448 aa).

This sequence belongs to the class-II aminoacyl-tRNA synthetase family. As to quaternary structure, homodimer.

The protein resides in the cytoplasm. It catalyses the reaction tRNA(Asn) + L-asparagine + ATP = L-asparaginyl-tRNA(Asn) + AMP + diphosphate + H(+). In Streptococcus suis (strain 98HAH33), this protein is Asparagine--tRNA ligase.